Here is a 699-residue protein sequence, read N- to C-terminus: Auxin response factor 10 (699 aa).

3 disordered regions span residues 108-136 (AAEA…DANN), 505-533 (TDLT…DDTK), and 551-595 (KNGN…SWSL). The span at 110–119 (EARREEENSR) shows a compositional bias: basic and acidic residues. A compositionally biased stretch (polar residues) spans 125–135 (FAKTLTQSDAN). The TF-B3 DNA-binding region spans 125-227 (FAKTLTQSDA…NIHVGLRRAK (103 aa)). Residues 570-593 (PNTSEGSDSGVTQGSPTKNTTPSW) are compositionally biased toward polar residues. Residues 613 to 693 (PGQCKVFVES…RKLRILTDAG (81 aa)) form the PB1 domain.

The protein belongs to the ARF family. Homodimers and heterodimers.

The protein localises to the nucleus. Functionally, auxin response factors (ARFs) are transcriptional factors that bind specifically to the DNA sequence 5'-TGTCTC-3' found in the auxin-responsive promoter elements (AuxREs). This Oryza sativa subsp. indica (Rice) protein is Auxin response factor 10 (ARF10).